Consider the following 434-residue polypeptide: Glutamate-1-semialdehyde 2,1-aminomutase 1 (434 aa).

Lysine 268 carries the N6-(pyridoxal phosphate)lysine modification.

It belongs to the class-III pyridoxal-phosphate-dependent aminotransferase family. HemL subfamily. Homodimer. Pyridoxal 5'-phosphate serves as cofactor.

The protein resides in the cytoplasm. It carries out the reaction (S)-4-amino-5-oxopentanoate = 5-aminolevulinate. It functions in the pathway porphyrin-containing compound metabolism; protoporphyrin-IX biosynthesis; 5-aminolevulinate from L-glutamyl-tRNA(Glu): step 2/2. This is Glutamate-1-semialdehyde 2,1-aminomutase 1 from Shouchella clausii (strain KSM-K16) (Alkalihalobacillus clausii).